Consider the following 283-residue polypeptide: Bifunctional protein FolD (283 aa).

NADP(+) is bound by residues 166 to 168 and serine 191; that span reads GRS.

The protein belongs to the tetrahydrofolate dehydrogenase/cyclohydrolase family. Homodimer.

It carries out the reaction (6R)-5,10-methylene-5,6,7,8-tetrahydrofolate + NADP(+) = (6R)-5,10-methenyltetrahydrofolate + NADPH. The enzyme catalyses (6R)-5,10-methenyltetrahydrofolate + H2O = (6R)-10-formyltetrahydrofolate + H(+). The protein operates within one-carbon metabolism; tetrahydrofolate interconversion. Its function is as follows. Catalyzes the oxidation of 5,10-methylenetetrahydrofolate to 5,10-methenyltetrahydrofolate and then the hydrolysis of 5,10-methenyltetrahydrofolate to 10-formyltetrahydrofolate. In Pediococcus pentosaceus (strain ATCC 25745 / CCUG 21536 / LMG 10740 / 183-1w), this protein is Bifunctional protein FolD.